We begin with the raw amino-acid sequence, 310 residues long: UPF0324 membrane protein VP0936 (310 aa).

Transmembrane regions (helical) follow at residues 7–29, 44–63, 75–94, 104–126, 133–155, 165–187, 199–218, 228–250, 257–279, and 289–308; these read PFGL…LVIG, IASF…GFGI, GIGL…SLIA, AYLI…APAI, IGLA…PVIG, FGTW…SAYG, LARA…IFSR, LVIP…FPQL, IFTI…ISIS, and LLFG…SWLV.

Belongs to the UPF0324 family.

The protein localises to the cell membrane. The sequence is that of UPF0324 membrane protein VP0936 from Vibrio parahaemolyticus serotype O3:K6 (strain RIMD 2210633).